The primary structure comprises 113 residues: Large ribosomal subunit protein uL22 (113 aa).

Belongs to the universal ribosomal protein uL22 family. In terms of assembly, part of the 50S ribosomal subunit.

In terms of biological role, this protein binds specifically to 23S rRNA; its binding is stimulated by other ribosomal proteins, e.g. L4, L17, and L20. It is important during the early stages of 50S assembly. It makes multiple contacts with different domains of the 23S rRNA in the assembled 50S subunit and ribosome. Functionally, the globular domain of the protein is located near the polypeptide exit tunnel on the outside of the subunit, while an extended beta-hairpin is found that lines the wall of the exit tunnel in the center of the 70S ribosome. The protein is Large ribosomal subunit protein uL22 of Natranaerobius thermophilus (strain ATCC BAA-1301 / DSM 18059 / JW/NM-WN-LF).